Reading from the N-terminus, the 323-residue chain is Forkhead transcription factor fkh-6 (323 aa).

The fork-head DNA-binding region spans 21-122 (KPPYSYVALI…DNGNFKRRRV (102 aa)).

It localises to the nucleus. In terms of biological role, probable transcription factor. Binds to the DNA sequence motif 5'-[TA]TGTT[TG]T[TG][ATG]TT-3'. Regulates sexual dimorphism in the gonad, promoting male gonadal cell fates in chromosomally (XO) male animals, yet plays a role in gonadogenesis in both sexes; probably acts downstream of terminal regulator of sex determination tra-1, to control early gonadogenesis. Positively modulates expression of homeobox protein egl-5, probably acting indirectly, during early gonadal development. The protein is Forkhead transcription factor fkh-6 of Caenorhabditis elegans.